Consider the following 1016-residue polypeptide: Calmodulin-binding transcription activator 4 (1016 aa).

The CG-1 DNA-binding region spans 38 to 164; that stretch reads ISTLYQEAHS…YRDVSEREEG (127 aa). The segment at 324–343 is disordered; sequence KNGSGPSGGTGGSGDQGSES. Residues 328-338 are compositionally biased toward gly residues; sequence GPSGGTGGSGD. ANK repeat units lie at residues 647–676, 680–709, and 719–748; these read QEQGIIHMVAGLGFEWAFYPILAHGVNVDF, KGWSALHWAAQFGSEKMVAALIASGASAGA, and NGKTAASIAASNGHKGLAGYLSEVALTNHL. A disordered region spans residues 753–786; it reads LEETENSKDTAQVQTEKTLNSISEQSPSGNEDQV. Residues 761 to 785 show a composition bias toward polar residues; it reads DTAQVQTEKTLNSISEQSPSGNEDQ. 3 IQ domains span residues 798–827, 855–884, and 878–907; these read AAQAAARIQAAFRAHSFRKRKQREAALVAC, YNSAALSIQKNFRGYKDRKCFLELRQKVVK, and LRQKVVKIQAHVRGYQIRKNYKVICWAVRI. Residues 903–925 form a calmodulin-binding region; that stretch reads WAVRILDKVVLRWRRKGVGLRGF. Phosphoserine is present on residues Ser935 and Ser962.

Belongs to the CAMTA family. Expressed in roots, stems, leaves, flowers and siliques.

The protein localises to the nucleus. In terms of biological role, transcription activator that binds to the DNA consensus sequence 5'-[ACG]CGCG[GTC]-3'. Regulates transcriptional activity in response to calcium signals. Binds calmodulin in a calcium-dependent manner. Involved together with CAMTA2 and CAMTA3 in the positive regulation of a general stress response. The protein is Calmodulin-binding transcription activator 4 of Arabidopsis thaliana (Mouse-ear cress).